We begin with the raw amino-acid sequence, 397 residues long: 8-amino-7-oxononanoate synthase (397 aa).

Residue arginine 23 coordinates substrate. Residue 110–111 (GY) coordinates pyridoxal 5'-phosphate. A substrate-binding site is contributed by histidine 135. The pyridoxal 5'-phosphate site is built by serine 181, histidine 209, and threonine 237. Lysine 240 carries the post-translational modification N6-(pyridoxal phosphate)lysine. Residue threonine 354 coordinates substrate.

The protein belongs to the class-II pyridoxal-phosphate-dependent aminotransferase family. BioF subfamily. In terms of assembly, homodimer. It depends on pyridoxal 5'-phosphate as a cofactor.

It carries out the reaction 6-carboxyhexanoyl-[ACP] + L-alanine + H(+) = (8S)-8-amino-7-oxononanoate + holo-[ACP] + CO2. The protein operates within cofactor biosynthesis; biotin biosynthesis. Functionally, catalyzes the decarboxylative condensation of pimeloyl-[acyl-carrier protein] and L-alanine to produce 8-amino-7-oxononanoate (AON), [acyl-carrier protein], and carbon dioxide. In Anaeromyxobacter dehalogenans (strain 2CP-C), this protein is 8-amino-7-oxononanoate synthase.